Here is a 93-residue protein sequence, read N- to C-terminus: Pyrimidine/purine nucleoside phosphorylase (93 aa).

This sequence belongs to the nucleoside phosphorylase PpnP family.

The enzyme catalyses a purine D-ribonucleoside + phosphate = a purine nucleobase + alpha-D-ribose 1-phosphate. It carries out the reaction adenosine + phosphate = alpha-D-ribose 1-phosphate + adenine. The catalysed reaction is cytidine + phosphate = cytosine + alpha-D-ribose 1-phosphate. It catalyses the reaction guanosine + phosphate = alpha-D-ribose 1-phosphate + guanine. The enzyme catalyses inosine + phosphate = alpha-D-ribose 1-phosphate + hypoxanthine. It carries out the reaction thymidine + phosphate = 2-deoxy-alpha-D-ribose 1-phosphate + thymine. The catalysed reaction is uridine + phosphate = alpha-D-ribose 1-phosphate + uracil. It catalyses the reaction xanthosine + phosphate = alpha-D-ribose 1-phosphate + xanthine. Functionally, catalyzes the phosphorolysis of diverse nucleosides, yielding D-ribose 1-phosphate and the respective free bases. Can use uridine, adenosine, guanosine, cytidine, thymidine, inosine and xanthosine as substrates. Also catalyzes the reverse reactions. The polypeptide is Pyrimidine/purine nucleoside phosphorylase (Hahella chejuensis (strain KCTC 2396)).